Consider the following 325-residue polypeptide: Secreted frizzled-related protein 3 (325 aa).

The N-terminal stretch at 1–32 (MVCGSPGGMLLLRAGLLALAALCLLRVPGARA) is a signal peptide. Residues 33–150 (AACEPVRIPL…VYDRGVCISP (118 aa)) form the FZ domain. Disulfide bonds link cysteine 35–cysteine 96, cysteine 43–cysteine 89, cysteine 80–cysteine 119, cysteine 108–cysteine 147, and cysteine 112–cysteine 136. A glycan (N-linked (GlcNAc...) asparagine) is linked at asparagine 49. Residues 178-298 (CKCKPIRATQ…WDMKLRHLGL (121 aa)) form the NTR domain. A disordered region spans residues 297–325 (GLSKSDSSNSDSTQSQKSGRNSNPRQARN). The segment covering 299-314 (SKSDSSNSDSTQSQKS) has biased composition (low complexity). A compositionally biased stretch (polar residues) spans 315 to 325 (GRNSNPRQARN).

The protein belongs to the secreted frizzled-related protein (sFRP) family. Interacts with MYOC. In terms of tissue distribution, expressed primarily in the cartilaginous cores of the long bone during embryonic and fetal development and in the appendicular skeleton (6-13 weeks). At 13 weeks of gestation, transcripts were present in early chondroblasts of the tarsal bones of the foot, the carpal bones of the hands and the epiphysis of long bones. Highly expressed in placenta and heart, followed by brain, skeletal muscle, kidney and pancreas. Weakly expressed in lung and liver.

The protein localises to the secreted. Its function is as follows. Soluble frizzled-related proteins (sFRPS) function as modulators of Wnt signaling through direct interaction with Wnts. They have a role in regulating cell growth and differentiation in specific cell types. SFRP3/FRZB appears to be involved in limb skeletogenesis. Antagonist of Wnt8 signaling. Regulates chondrocyte maturation and long bone development. The chain is Secreted frizzled-related protein 3 (FRZB) from Homo sapiens (Human).